The following is a 936-amino-acid chain: Pre-rRNA-processing protein FHL1 (936 aa).

Disordered regions lie at residues 1–90 (MDGE…NGNL) and 139–169 (DHSR…QDNT). The span at 9–29 (ESSNHVGTSSPTTETQFTIDS) shows a compositional bias: polar residues. At serine 44 the chain carries Phosphoserine. Residues 139-150 (DHSREVSSKEDI) are compositionally biased toward basic and acidic residues. Residue serine 228 is modified to Phosphoserine. A phosphothreonine mark is found at threonine 230 and threonine 247. Over residues 243–257 (PPQNTVTENNSTDAE) the composition is skewed to polar residues. Positions 243–270 (PPQNTVTENNSTDAETTQRKLSEPIDAS) are disordered. Residue serine 264 is modified to Phosphoserine. The region spanning 300 to 357 (AIIGRRSENDFSHKVDVNLGPSKSISRRHAQIFYNFGTGRFELSIIGKNGAFVDDIFV) is the FHA domain. A compositionally biased stretch (basic and acidic residues) spans 384–395 (EQERNDDSKSPE). The tract at residues 384-442 (EQERNDDSKSPENADIAESEINTRNLKKNEPKSKKKITTGAKPKKAQTKPAVKKEKKPP) is disordered. Residues 416–430 (SKKKITTGAKPKKAQ) are compositionally biased toward basic residues. A DNA-binding region (fork-head) is located at residues 460-552 (TKPTVSYSAM…ERQKKKQSEI (93 aa)). The interval 718–936 (AKAQHSKPIR…EVNVSLEEKL (219 aa)) is disordered. 2 stretches are compositionally biased toward polar residues: residues 742-753 (SQLSASASSHPN) and 765-777 (DPSS…QPRQ). Composition is skewed to low complexity over residues 779-795 (ARAT…AAAS) and 815-853 (ESGT…TSSE). The segment covering 854-863 (SESESDSGSE) has biased composition (acidic residues). The segment covering 864–911 (VDEKNNKNEKIDSESIKNNESKDDIPSKDENSSNDNREISKTDEEGHD) has biased composition (basic and acidic residues).

It is found in the nucleus. In terms of biological role, acts as a transcriptional regulator that recruits coactivator IFH1 to the promoters of ribosomal protein genes. Recruited to ribosomal gene promoters by RAP1. In Saccharomyces cerevisiae (strain ATCC 204508 / S288c) (Baker's yeast), this protein is Pre-rRNA-processing protein FHL1 (FHL1).